The following is a 276-amino-acid chain: NAD-capped RNA hydrolase NudC (276 aa).

Arginine 82 provides a ligand contact to substrate. Positions 112 and 115 each coordinate Zn(2+). Glutamate 125 lines the substrate pocket. The Zn(2+) site is built by cysteine 130 and cysteine 133. Position 138 (tyrosine 138) interacts with substrate. One can recognise a Nudix hydrolase domain in the interval 139-262 (PRLSPSMIVL…SIARYLIELY (124 aa)). Residues alanine 172, glutamate 188, and glutamate 192 each coordinate a divalent metal cation. The short motif at 173–194 (GYVEPGESVEQCVAREVREEVG) is the Nudix box element. 206 to 213 (QGWPFPHS) lines the substrate pocket. Glutamate 233 provides a ligand contact to a divalent metal cation. Alanine 255 contacts substrate.

The protein belongs to the Nudix hydrolase family. NudC subfamily. Homodimer. Requires Mg(2+) as cofactor. Mn(2+) serves as cofactor. It depends on Zn(2+) as a cofactor.

The enzyme catalyses a 5'-end NAD(+)-phospho-ribonucleoside in mRNA + H2O = a 5'-end phospho-adenosine-phospho-ribonucleoside in mRNA + beta-nicotinamide D-ribonucleotide + 2 H(+). The catalysed reaction is NAD(+) + H2O = beta-nicotinamide D-ribonucleotide + AMP + 2 H(+). It carries out the reaction NADH + H2O = reduced beta-nicotinamide D-ribonucleotide + AMP + 2 H(+). In terms of biological role, mRNA decapping enzyme that specifically removes the nicotinamide adenine dinucleotide (NAD) cap from a subset of mRNAs by hydrolyzing the diphosphate linkage to produce nicotinamide mononucleotide (NMN) and 5' monophosphate mRNA. The NAD-cap is present at the 5'-end of some mRNAs and stabilizes RNA against 5'-processing. Has preference for mRNAs with a 5'-end purine. Catalyzes the hydrolysis of a broad range of dinucleotide pyrophosphates. In Stutzerimonas stutzeri (strain A1501) (Pseudomonas stutzeri), this protein is NAD-capped RNA hydrolase NudC.